The following is a 311-amino-acid chain: Aspartate carbamoyltransferase catalytic subunit (311 aa).

Carbamoyl phosphate is bound by residues R55 and T56. K85 is an L-aspartate binding site. R106, H135, and Q138 together coordinate carbamoyl phosphate. Residues R168 and R230 each coordinate L-aspartate. Residues L268 and P269 each coordinate carbamoyl phosphate.

It belongs to the aspartate/ornithine carbamoyltransferase superfamily. ATCase family. In terms of assembly, heterododecamer (2C3:3R2) of six catalytic PyrB chains organized as two trimers (C3), and six regulatory PyrI chains organized as three dimers (R2).

It carries out the reaction carbamoyl phosphate + L-aspartate = N-carbamoyl-L-aspartate + phosphate + H(+). Its pathway is pyrimidine metabolism; UMP biosynthesis via de novo pathway; (S)-dihydroorotate from bicarbonate: step 2/3. Its function is as follows. Catalyzes the condensation of carbamoyl phosphate and aspartate to form carbamoyl aspartate and inorganic phosphate, the committed step in the de novo pyrimidine nucleotide biosynthesis pathway. The polypeptide is Aspartate carbamoyltransferase catalytic subunit (Baumannia cicadellinicola subsp. Homalodisca coagulata).